Here is an 85-residue protein sequence, read N- to C-terminus: Exodeoxyribonuclease 7 small subunit (85 aa).

The protein belongs to the XseB family. As to quaternary structure, heterooligomer composed of large and small subunits.

It localises to the cytoplasm. The catalysed reaction is Exonucleolytic cleavage in either 5'- to 3'- or 3'- to 5'-direction to yield nucleoside 5'-phosphates.. In terms of biological role, bidirectionally degrades single-stranded DNA into large acid-insoluble oligonucleotides, which are then degraded further into small acid-soluble oligonucleotides. The chain is Exodeoxyribonuclease 7 small subunit from Alkalilimnicola ehrlichii (strain ATCC BAA-1101 / DSM 17681 / MLHE-1).